The following is a 354-amino-acid chain: NADH-quinone oxidoreductase subunit H (354 aa).

10 helical membrane passes run 12 to 32 (LLGG…LIAP), 62 to 82 (PWGL…EIIL), 89 to 109 (GLFL…WVVV), 124 to 144 (LLFL…AGWA), 162 to 182 (VSYE…SGTL), 203 to 223 (FLSW…ISGL), 239 to 259 (EIVA…FFLA), 263 to 283 (NMIL…LPPI), 291 to 311 (IPGW…FLWV), and 326 to 346 (LGWK…GLWI).

This sequence belongs to the complex I subunit 1 family. As to quaternary structure, NDH-1 is composed of 14 different subunits. Subunits NuoA, H, J, K, L, M, N constitute the membrane sector of the complex.

It localises to the cell inner membrane. It carries out the reaction a quinone + NADH + 5 H(+)(in) = a quinol + NAD(+) + 4 H(+)(out). Functionally, NDH-1 shuttles electrons from NADH, via FMN and iron-sulfur (Fe-S) centers, to quinones in the respiratory chain. The immediate electron acceptor for the enzyme in this species is believed to be ubiquinone. Couples the redox reaction to proton translocation (for every two electrons transferred, four hydrogen ions are translocated across the cytoplasmic membrane), and thus conserves the redox energy in a proton gradient. This subunit may bind ubiquinone. The polypeptide is NADH-quinone oxidoreductase subunit H (Methylibium petroleiphilum (strain ATCC BAA-1232 / LMG 22953 / PM1)).